The sequence spans 419 residues: Serine hydroxymethyltransferase (419 aa).

Residues Leu121 and 125 to 127 contribute to the (6S)-5,6,7,8-tetrahydrofolate site; that span reads GHL. N6-(pyridoxal phosphate)lysine is present on Lys229. 354–356 provides a ligand contact to (6S)-5,6,7,8-tetrahydrofolate; the sequence is SPF.

Belongs to the SHMT family. In terms of assembly, homodimer. Requires pyridoxal 5'-phosphate as cofactor.

Its subcellular location is the cytoplasm. The enzyme catalyses (6R)-5,10-methylene-5,6,7,8-tetrahydrofolate + glycine + H2O = (6S)-5,6,7,8-tetrahydrofolate + L-serine. The protein operates within one-carbon metabolism; tetrahydrofolate interconversion. Its pathway is amino-acid biosynthesis; glycine biosynthesis; glycine from L-serine: step 1/1. Catalyzes the reversible interconversion of serine and glycine with tetrahydrofolate (THF) serving as the one-carbon carrier. This reaction serves as the major source of one-carbon groups required for the biosynthesis of purines, thymidylate, methionine, and other important biomolecules. Also exhibits THF-independent aldolase activity toward beta-hydroxyamino acids, producing glycine and aldehydes, via a retro-aldol mechanism. The chain is Serine hydroxymethyltransferase from Coxiella burnetii (strain RSA 331 / Henzerling II).